A 1023-amino-acid polypeptide reads, in one-letter code: NRPS-like oxidoreductase fscA (1023 aa).

Positions 54 to 454 are adenylation; sequence TYGDLNGMAT…NHPFVRQCMV (401 aa). The Carrier domain maps to 554-637; sequence PEDDVIGRQI…SIANHVRSAQ (84 aa). Residue Ser-596 is modified to O-(pantetheine 4'-phosphoryl)serine. The Thioester reductase (TE) domain maps to 685-901; it reads LTGGAGYLGQ…VYDESTTRAR (217 aa).

It belongs to the NRP synthetase family. The cofactor is pantetheine 4'-phosphate.

The protein operates within secondary metabolite biosynthesis. Functionally, NRPS-like oxidoreductasee; part of the fragmented gene cluster that mediates the biosynthesis of fusarochromene, a tryptophan-derived metabolite closely related to a group of mycotoxins including fusarochromanone. Within the pathway, fscA acts as an oxidoreductase that reduces the carboxyl group of 4-hydroxykyrunenine to primary alcohol. The first step of the pathway is the epimerization of L-tryptophan to D-tryptophan in the presence of the NRPS-like tryptophan epimerase fscC. D-tryptophan is subsequently hydroxylated by the tryptophan 6-hydroxylase fscE to yield 6-hydroxytryptophan. The pyrrole ring undergoes cleavaged by the tryptophan 2,3-dioxygenase fscD and is finally converted to 4-hydroxykyrunenine by the hydrolase fscH. The NRPS-like oxidoreductase fscA reduces the carboxyl group to primary alcohol and the DMATS-type prenyltransferase fscG performs prenylation, followed by the formation of a chromene ring catalyzed by the oxidoreductase fscI, which leads to desacetylfusarochromene. Epoxidation by fscF and rearrangement reactions of chromene double bonds convert compound desacetylfusarochromene to fusarochromanones. Although specific acetyltransferases were not found near the fsc gene cluster, several predicted enzymes containing the N-acetyltransferase superfamily domain are present in the genome of F.equiseti. These predicted enzymes may have the potential to convert desacetylfusarochromene to fusarochromene. This chain is NRPS-like oxidoreductase fscA, found in Fusarium equiseti (Fusarium scirpi).